A 388-amino-acid chain; its full sequence is Chorismate synthase (388 aa).

NADP(+) is bound by residues arginine 39 and arginine 45. Residues 130-132, 251-252, glycine 296, 311-315, and arginine 337 contribute to the FMN site; these read RSS, NA, and KPIPT.

It belongs to the chorismate synthase family. Homotetramer. Requires FMNH2 as cofactor.

It carries out the reaction 5-O-(1-carboxyvinyl)-3-phosphoshikimate = chorismate + phosphate. Its pathway is metabolic intermediate biosynthesis; chorismate biosynthesis; chorismate from D-erythrose 4-phosphate and phosphoenolpyruvate: step 7/7. In terms of biological role, catalyzes the anti-1,4-elimination of the C-3 phosphate and the C-6 proR hydrogen from 5-enolpyruvylshikimate-3-phosphate (EPSP) to yield chorismate, which is the branch point compound that serves as the starting substrate for the three terminal pathways of aromatic amino acid biosynthesis. This reaction introduces a second double bond into the aromatic ring system. The protein is Chorismate synthase of Streptococcus pneumoniae (strain 70585).